Consider the following 272-residue polypeptide: Aquaporin-1 (272 aa).

Topologically, residues 1-11 (MASEFKKKLFW) are cytoplasmic. A helical membrane pass occupies residues 12 to 29 (RAVVAEFLAMILFIFISI). Residues 30-48 (GSALGFHYPIKSNQTTGAV) lie on the Extracellular side of the membrane. An N-linked (GlcNAc...) asparagine glycan is attached at N42. A helical membrane pass occupies residues 49 to 67 (QDNVKVSLAFGLSIATLAQ). At 68 to 70 (SVG) the chain is on the cytoplasmic side. The stretch at 71 to 84 (HISGAHLNPAVTLG) is an intramembrane region. Positions 78-80 (NPA) match the NPA 1 motif. The Cytoplasmic portion of the chain corresponds to 85–92 (LLLSCQIS). Residues 93 to 111 (ILRAIMYIIAQCVGAIVAT) form a helical membrane-spanning segment. Over 112 to 135 (VILSGITSSLPDNSLGLNALAPGV) the chain is Extracellular. A helical membrane pass occupies residues 136-155 (NSGQGLGIEIIGTLQLVLCV). At 156 to 166 (LATTDRRRRRD) the chain is on the cytoplasmic side. A helical membrane pass occupies residues 167–184 (LGDSGPLAIGFSVALGHL). The Extracellular portion of the chain corresponds to 185–189 (LAIDY). Residues 190-202 (TGCGINPARSFGS) lie within the membrane without spanning it. The NPA 2 motif lies at 195–197 (NPA). Residues 203 to 209 (SVITHNF) lie on the Extracellular side of the membrane. Residues 210–227 (QDHWIFWVGPFIGAALAV) traverse the membrane as a helical segment. Over 228-272 (LIYDFILAPRSSDLTDRVKVWTSGQVEEYDLDADDINSRVEMKPK) the chain is Cytoplasmic. S250 carries the post-translational modification Phosphoserine. Y256 bears the Phosphotyrosine mark. Phosphoserine is present on S265.

It belongs to the MIP/aquaporin (TC 1.A.8) family. Homotetramer; each monomer provides an independent water pore. Component of the ankyrin-1 complex in the erythrocyte, composed of ANK1, RHCE, RHAG, SLC4A1, EPB42, GYPA, GYPB and AQP1. Interacts with EPHB2; involved in endolymph production in the inner ear. Identified in a complex with STOM. Interacts (via the N-terminal) with ANK1 (via ANK 1-5 repeats). Interacts (via the C-terminal) with EPB42. As to expression, detected in fetal kidney (at protein level). Detected in fetal kidney.

The protein localises to the cell membrane. The catalysed reaction is H2O(in) = H2O(out). The enzyme catalyses nitric oxide(out) = nitric oxide(in). It catalyses the reaction CO2(out) = CO2(in). It carries out the reaction glycerol(in) = glycerol(out). The catalysed reaction is H2O2(out) = H2O2(in). The enzyme catalyses K(+)(in) = K(+)(out). It catalyses the reaction Na(+)(in) = Na(+)(out). Functionally, forms a water channel that facilitates the transport of water across cell membranes, playing a crucial role in water homeostasis in various tissues. Could also be permeable to small solutes including hydrogen peroxide, glycerol and gases such as amonnia (NH3), nitric oxide (NO) and carbon dioxide (CO2). Recruited to the ankyrin-1 complex, a multiprotein complex of the erythrocyte membrane, it could be part of a CO2 metabolon, linking facilitated diffusion of CO2 across the membrane, anion exchange of Cl(-)/HCO3(-) and interconversion of dissolved CO2 and carbonic acid in the cytosol. In vitro, it shows non-selective gated cation channel activity and may be permeable to cations like K(+) and Na(+) in vivo. The sequence is that of Aquaporin-1 from Ovis aries (Sheep).